We begin with the raw amino-acid sequence, 308 residues long: Ribosomal RNA large subunit methyltransferase F (308 aa).

It belongs to the methyltransferase superfamily. METTL16/RlmF family.

The protein localises to the cytoplasm. The catalysed reaction is adenosine(1618) in 23S rRNA + S-adenosyl-L-methionine = N(6)-methyladenosine(1618) in 23S rRNA + S-adenosyl-L-homocysteine + H(+). Functionally, specifically methylates the adenine in position 1618 of 23S rRNA. The polypeptide is Ribosomal RNA large subunit methyltransferase F (Salmonella dublin (strain CT_02021853)).